We begin with the raw amino-acid sequence, 470 residues long: Mucin-like protein 3 (470 aa).

A signal peptide spans 1 to 29; it reads MAQMTSGLYPMFGFFICLLFLPASWEAGA. Topologically, residues 30–401 are extracellular; that stretch reads NTFQELQKTG…EGSNSFPAWA (372 aa). Disordered stretches follow at residues 57 to 234 and 248 to 318; these read RALS…HTIP and TKEA…KAPE. Polar residues predominate over residues 75-87; the sequence is STATQKPKRQCNT. N122 carries an N-linked (GlcNAc...) asparagine glycan. Basic and acidic residues predominate over residues 132–152; that stretch reads ARNERSADDHGSTNSEKRSDG. Positions 169 to 193 are enriched in polar residues; that stretch reads TRTSGTPVSSTETSTKLRTTSQKPE. Basic and acidic residues predominate over residues 194-203; that stretch reads TSSHDSDLIR. Positions 204 to 222 are enriched in polar residues; it reads KSTSLPVKSTEVSRTSYRT. Over residues 260–273 the composition is skewed to basic and acidic residues; that stretch reads KYERETRSASERIS. Residues 283–295 show a composition bias toward polar residues; sequence HTPSAGETTTQVS. A glycan (N-linked (GlcNAc...) asparagine) is linked at N325. The helical transmembrane segment at 402-422 threads the bilayer; that stretch reads IVVVILMAVIILLIFLGLIFL. Topologically, residues 423-470 are cytoplasmic; sequence VSCASRARHQLTQNSEDAEPEDKGGRNSYPVYLMEQQNLNLNQISSPP.

It is found in the cell membrane. It localises to the cytoplasm. Its function is as follows. May modulate NF-kappaB signaling and play a role in cell growth. The polypeptide is Mucin-like protein 3 (Rattus norvegicus (Rat)).